Here is a 162-residue protein sequence, read N- to C-terminus: Phenazine biosynthesis protein PhzA2 (162 aa).

The protein belongs to the PhzA/PhzB family.

It functions in the pathway antibiotic biosynthesis; phenazine biosynthesis. Functionally, involved in the biosynthesis of the antibiotic phenazine, a nitrogen-containing heterocyclic molecule having important roles in virulence, competition and biological control. PhzA2 (operon phzA2B2C2E2F2G2) has a role in the biosynthesis of the phenazine during both planktonic growth and biofilm development, and in host infection during biofilm development. The protein is Phenazine biosynthesis protein PhzA2 of Pseudomonas aeruginosa (strain ATCC 15692 / DSM 22644 / CIP 104116 / JCM 14847 / LMG 12228 / 1C / PRS 101 / PAO1).